Consider the following 305-residue polypeptide: Ribonuclease BN (305 aa).

Histidine 64, histidine 66, aspartate 68, histidine 69, histidine 141, aspartate 212, and histidine 270 together coordinate Zn(2+). The active-site Proton acceptor is aspartate 68.

Belongs to the RNase Z family. RNase BN subfamily. As to quaternary structure, homodimer. Zn(2+) is required as a cofactor.

Zinc phosphodiesterase, which has both exoribonuclease and endoribonuclease activities. The chain is Ribonuclease BN from Escherichia coli O7:K1 (strain IAI39 / ExPEC).